A 74-amino-acid chain; its full sequence is Cytochrome c oxidase assembly factor 5 (74 aa).

Residues 27 to 65 (QSACVLQEGKSPRQCLKEGNCRALQYSFFECKRSMLDAR) form the CHCH domain. A Cx10C motif motif is present at residues 30–41 (CVLQEGKSPRQC). 2 disulfides stabilise this stretch: Cys30–Cys57 and Cys41–Cys47. Phosphoserine is present on Ser37. The Cx9C motif motif lies at 47-57 (CRALQYSFFEC).

Belongs to the PET191 family.

Involved in an early step of the mitochondrial complex IV assembly process. The protein is Cytochrome c oxidase assembly factor 5 (Coa5) of Mus musculus (Mouse).